Consider the following 231-residue polypeptide: L-ribulose-5-phosphate 4-epimerase SgbE (231 aa).

Substrate-binding positions include 27 to 28, 44 to 45, and 74 to 75; these read GN, SG, and SS. Aspartate 76, histidine 95, and histidine 97 together coordinate Zn(2+). Aspartate 120 (proton donor/acceptor) is an active-site residue. Position 171 (histidine 171) interacts with Zn(2+). The active-site Proton donor/acceptor is the tyrosine 229.

The protein belongs to the aldolase class II family. AraD/FucA subfamily. The cofactor is Zn(2+).

The catalysed reaction is L-ribulose 5-phosphate = D-xylulose 5-phosphate. Its function is as follows. Catalyzes the interconversion of L-ribulose 5-phosphate (LRu5P) and D-xylulose 5-phosphate (D-Xu5P) via a retroaldol/aldol mechanism (carbon-carbon bond cleavage analogous to a class II aldolase reaction). May be involved in the utilization of 2,3-diketo-L-gulonate. This Escherichia coli (strain K12) protein is L-ribulose-5-phosphate 4-epimerase SgbE.